A 311-amino-acid chain; its full sequence is Oxidoreductase NAD-binding domain-containing protein 1 (311 aa).

Positions 1–17 are cleaved as a signal peptide; that stretch reads MACAAVMIPGLLRCSVG. Residues 50–186 enclose the FAD-binding FR-type domain; sequence HMERTASVLR…GGVGINPLLS (137 aa). 178-183 contacts NAD(+); the sequence is GVGINP.

The chain is Oxidoreductase NAD-binding domain-containing protein 1 (OXNAD1) from Pongo abelii (Sumatran orangutan).